We begin with the raw amino-acid sequence, 178 residues long: Interleukin-10 (178 aa).

An N-terminal signal peptide occupies residues 1–18 (MHSSALLCCLVLLTGVRA). Intrachain disulfides connect C30–C126 and C80–C132. N134 is a glycosylation site (N-linked (GlcNAc...) asparagine).

It belongs to the IL-10 family. Homodimer. Interacts with IL10RA and IL10RB.

Its subcellular location is the secreted. Functionally, major immune regulatory cytokine that acts on many cells of the immune system where it has profound anti-inflammatory functions, limiting excessive tissue disruption caused by inflammation. Mechanistically, IL10 binds to its heterotetrameric receptor comprising IL10RA and IL10RB leading to JAK1 and STAT2-mediated phosphorylation of STAT3. In turn, STAT3 translocates to the nucleus where it drives expression of anti-inflammatory mediators. Targets antigen-presenting cells (APCs) such as macrophages and monocytes and inhibits their release of pro-inflammatory cytokines including granulocyte-macrophage colony-stimulating factor /GM-CSF, granulocyte colony-stimulating factor/G-CSF, IL-1 alpha, IL-1 beta, IL-6, IL-8 and TNF-alpha. Also interferes with antigen presentation by reducing the expression of MHC-class II and co-stimulatory molecules, thereby inhibiting their ability to induce T cell activation. In addition, controls the inflammatory response of macrophages by reprogramming essential metabolic pathways including mTOR signaling. This chain is Interleukin-10 (IL10), found in Macaca mulatta (Rhesus macaque).